The sequence spans 364 residues: sn-glycerol-3-phosphate import ATP-binding protein UgpC (364 aa).

Positions 4-235 (VVLRNVRKTY…PATTFVASFI (232 aa)) constitute an ABC transporter domain. 37 to 44 (GPSGCGKS) contributes to the ATP binding site.

This sequence belongs to the ABC transporter superfamily. sn-glycerol-3-phosphate importer (TC 3.A.1.1.3) family. The complex is composed of two ATP-binding proteins (UgpC), two transmembrane proteins (UgpA and UgpE) and a solute-binding protein (UgpB).

Its subcellular location is the cell inner membrane. The enzyme catalyses sn-glycerol 3-phosphate(out) + ATP + H2O = sn-glycerol 3-phosphate(in) + ADP + phosphate + H(+). In terms of biological role, part of the ABC transporter complex UgpBAEC involved in sn-glycerol-3-phosphate (G3P) import. Responsible for energy coupling to the transport system. This is sn-glycerol-3-phosphate import ATP-binding protein UgpC from Rhodopseudomonas palustris (strain HaA2).